We begin with the raw amino-acid sequence, 145 residues long: Transcription antitermination protein NusB (145 aa).

The protein belongs to the NusB family.

Involved in transcription antitermination. Required for transcription of ribosomal RNA (rRNA) genes. Binds specifically to the boxA antiterminator sequence of the ribosomal RNA (rrn) operons. In Burkholderia mallei (strain NCTC 10247), this protein is Transcription antitermination protein NusB.